The sequence spans 215 residues: High mobility group protein B1 (215 aa).

1–10 (MGKGDPKKPR) is a heparin binding site. Positions 1 to 97 (MGKGDPKKPR…KFKDPNAPKR (97 aa)) are sufficient for interaction with HAVCR2. Residues Lys-3, Lys-7, Lys-8, and Lys-12 each carry the N6-acetyllysine modification. Residues 3 to 15 (KGDPKKPRGKMSS) form an LPS binding (delipidated) region. Residues 9 to 79 (PRGKMSSYAF…RYEREMKTYI (71 aa)) constitute a DNA-binding region (HMG box 1). The residue at position 23 (Cys-23) is a Cysteine sulfonic acid (-SO3H); alternate. Residues Cys-23 and Cys-45 are joined by a disulfide bond. An NLS 1 region spans residues 27–43 (HKKKHPDASVNFSEFSK). A Nuclear localization signal (NLS) 1 motif is present at residues 27–43 (HKKKHPDASVNFSEFSK). 3 positions are modified to N6-acetyllysine: Lys-28, Lys-29, and Lys-30. Lys-28 participates in a covalent cross-link: Isoglutamyl lysine isopeptide (Lys-Gln) (interchain with Q-?). The residue at position 35 (Ser-35) is a Phosphoserine. The residue at position 43 (Lys-43) is an N6-acetyllysine. Isoglutamyl lysine isopeptide (Lys-Gln) (interchain with Q-?) cross-links involve residues Lys-43 and Lys-44. Residue Cys-45 is modified to Cysteine sulfonic acid (-SO3H); alternate. An Isoglutamyl lysine isopeptide (Lys-Gln) (interchain with Q-?) cross-link involves residue Lys-68. Residues 76–95 (KTYIPPKGETKKKFKDPNAP) are disordered. An LPS binding (Lipid A) region spans residues 80 to 96 (PPKGETKKKFKDPNAPK). The span at 83 to 94 (GETKKKFKDPNA) shows a compositional bias: basic and acidic residues. Residues 89–108 (FKDPNAPKRPPSAFFLFCSE) are cytokine-stimulating activity. An N6-acetyllysine modification is found at Lys-90. The segment at residues 95 to 163 (PKRPPSAFFL…KYEKDIAAYR (69 aa)) is a DNA-binding region (HMG box 2). Ser-100 carries the post-translational modification Phosphoserine. Cys-106 carries the post-translational modification Cysteine sulfonic acid (-SO3H). An N6-acetyllysine mark is found at Lys-127, Lys-128, Lys-141, Lys-172, Lys-173, Lys-177, and Lys-180. The binding to AGER/RAGE stretch occupies residues 150-183 (KLKEKYEKDIAAYRAKGKPDAAKKGVVKAEKSKK). A compositionally biased stretch (basic and acidic residues) spans 161–179 (AYRAKGKPDAAKKGVVKAE). Residues 161–215 (AYRAKGKPDAAKKGVVKAEKSKKKKEEEDDEEDEEDEEEEEEEEDEDEEEDDDDE) form a disordered region. Residues 178–184 (AEKSKKK) form an NLS 2 region. Residues 178-184 (AEKSKKK) carry the Nuclear localization signal (NLS) 2 motif. Residue Lys-180 forms an Isoglutamyl lysine isopeptide (Lys-Gln) (interchain with Q-?) linkage. ADP-ribosylserine is present on Ser-181. 4 positions are modified to N6-acetyllysine: Lys-182, Lys-183, Lys-184, and Lys-185. Isoglutamyl lysine isopeptide (Lys-Gln) (interchain with Q-?) cross-links involve residues Lys-182, Lys-183, and Lys-184. Over residues 187-215 (EEDDEEDEEDEEEEEEEEDEDEEEDDDDE) the composition is skewed to acidic residues.

This sequence belongs to the HMGB family. In terms of assembly, interacts (fully reduced HMGB1) with CXCL12; probably in a 1:2 ratio involving two molecules of CXCL12, each interacting with one HMG box of HMGB1; inhibited by glycyrrhizin. Associates with the TLR4:LY96 receptor complex. Component of the RAG complex composed of core components RAG1 and RAG2, and associated component HMGB1 or HMGB2. Interacts (in cytoplasm upon starvation) with BECN1; inhibits the interaction of BECN1 and BCL2 leading to promotion of autophagy. Interacts with KPNA1; involved in nuclear import. Interacts with SREBF1, TLR2, TLR4, TLR9, APEX1, FEN1, POLB, TERT. Interacts with AGER, PTPRZ1, IL1B, MSH2, XPA, XPC, HNF1A, TP53. Interacts with CD24; the probable CD24:SIGLEC10 complex is proposed to inhibit HGMB1-mediated tissue damage immune response. Interacts with THBD; prevents HGMB1 interaction with ACER/RAGE and inhibits HGMB1 pro-inflammatory activity. Interacts with HAVCR2; impairs HMGB1 binding to B-DNA and likely HMGB1-mediated innate immune response. Interacts with XPO1; mediating nuclear export. Interacts with receptor RAGE/AGER. Acetylated on multiple sites upon stimulation with LPS. Acetylation on lysine residues in the nuclear localization signals (NLS 1 and NLS 2) leads to cytoplasmic localization and subsequent secretion. Acetylation on Lys-3 results in preferential binding to DNA ends and impairs DNA bending activity. Post-translationally, phosphorylated at serine residues. Phosphorylation in both NLS regions is required for cytoplasmic translocation followed by secretion. In terms of processing, reduction/oxidation of cysteine residues Cys-23, Cys-45 and Cys-106 and a possible intramolecular disulfide bond involving Cys-23 and Cys-45 give rise to different redox forms with specific functional activities in various cellular compartments: 1- Fully reduced HGMB1 (HMGB1C23hC45hC106h), 2- Disulfide HMGB1 (HMGB1C23-C45C106h) and 3- Sulfonyl HMGB1 (HMGB1C23soC45soC106so). Poly-ADP-ribosylated by PARP1 when secreted following stimulation with LPS. Post-translationally, in vitro cleavage by CASP1 is liberating a HMG box 1-containing peptide which may mediate immunogenic activity; the peptide antagonizes apoptosis-induced immune tolerance. Can be proteolytically cleaved by a thrombin:thrombomodulin complex; reduces binding to heparin and pro-inflammatory activities. In terms of processing, forms covalent cross-links mediated by transglutaminase TGM2, between a glutamine and the epsilon-amino group of a lysine residue, forming homopolymers and heteropolymers. Serum levels are found elevated in mice with modeled systemic lupus erythematosus (SLE) and are correlated with SLE disease activity.

Its subcellular location is the nucleus. The protein resides in the cytoplasm. It localises to the chromosome. It is found in the cell membrane. The protein localises to the endosome. Its subcellular location is the endoplasmic reticulum-Golgi intermediate compartment. The protein resides in the secreted. In terms of biological role, multifunctional redox sensitive protein with various roles in different cellular compartments. In the nucleus is one of the major chromatin-associated non-histone proteins and acts as a DNA chaperone involved in replication, transcription, chromatin remodeling, V(D)J recombination, DNA repair and genome stability. Proposed to be an universal biosensor for nucleic acids. Promotes host inflammatory response to sterile and infectious signals and is involved in the coordination and integration of innate and adaptive immune responses. In the cytoplasm functions as a sensor and/or chaperone for immunogenic nucleic acids implicating the activation of TLR9-mediated immune responses, and mediates autophagy. Acts as a danger associated molecular pattern (DAMP) molecule that amplifies immune responses during tissue injury. Released to the extracellular environment can bind DNA, nucleosomes, IL-1 beta, CXCL12, AGER isoform 2/sRAGE, lipopolysaccharide (LPS) and lipoteichoic acid (LTA), and activates cells through engagement of multiple surface receptors. In the extracellular compartment fully reduced HMGB1 (released by necrosis) acts as a chemokine, disulfide HMGB1 (actively secreted) as a cytokine, and sulfonyl HMGB1 (released from apoptotic cells) promotes immunological tolerance. Has proangiogenic activity. May be involved in platelet activation. Binds to phosphatidylserine and phosphatidylethanolamide. Bound to RAGE mediates signaling for neuronal outgrowth. May play a role in accumulation of expanded polyglutamine (polyQ) proteins. Functionally, nuclear functions are attributed to fully reduced HGMB1. Associates with chromatin and binds DNA with a preference to non-canonical DNA structures such as single-stranded DNA, DNA-containing cruciforms or bent structures, supercoiled DNA and ZDNA. Can bent DNA and enhance DNA flexibility by looping thus providing a mechanism to promote activities on various gene promoters by enhancing transcription factor binding and/or bringing distant regulatory sequences into close proximity. May be involved in nucleotide excision repair (NER), mismatch repair (MMR) and base excision repair (BER) pathways, and double strand break repair such as non-homologous end joining (NHEJ). Involved in V(D)J recombination by acting as a cofactor of the RAG complex: acts by stimulating cleavage and RAG protein binding at the 23 bp spacer of conserved recombination signal sequences (RSS). In vitro can displace histone H1 from highly bent DNA. Can restructure the canonical nucleosome leading to relaxation of structural constraints for transcription factor-binding. Enhances binding of sterol regulatory element-binding proteins (SREBPs) such as SREBF1 to their cognate DNA sequences and increases their transcriptional activities. Facilitates binding of TP53 to DNA. Proposed to be involved in mitochondrial quality control and autophagy in a transcription-dependent fashion implicating HSPB1; however, this function has been questioned. Can modulate the activity of the telomerase complex and may be involved in telomere maintenance. Its function is as follows. In the cytoplasm proposed to dissociate the BECN1:BCL2 complex via competitive interaction with BECN1 leading to autophagy activation. Can protect BECN1 and ATG5 from calpain-mediated cleavage and thus proposed to control their proautophagic and proapoptotic functions and to regulate the extent and severity of inflammation-associated cellular injury. In myeloid cells has a protective role against endotoxemia and bacterial infection by promoting autophagy. Involved in endosomal translocation and activation of TLR9 in response to CpG-DNA in macrophages. In the extracellular compartment (following either active secretion or passive release) involved in regulation of the inflammatory response. Fully reduced HGMB1 (which subsequently gets oxidized after release) in association with CXCL12 mediates the recruitment of inflammatory cells during the initial phase of tissue injury; the CXCL12:HMGB1 complex triggers CXCR4 homodimerization. Induces the migration of monocyte-derived immature dendritic cells and seems to regulate adhesive and migratory functions of neutrophils implicating AGER/RAGE and ITGAM. Can bind to various types of DNA and RNA including microbial unmethylated CpG-DNA to enhance the innate immune response to nucleic acids. Proposed to act in promiscuous DNA/RNA sensing which cooperates with subsequent discriminative sensing by specific pattern recognition receptors. Promotes extracellular DNA-induced AIM2 inflammasome activation implicating AGER/RAGE. Disulfide HMGB1 binds to transmembrane receptors, such as AGER/RAGE, TLR2, TLR4 and probably TREM1, thus activating their signal transduction pathways. Mediates the release of cytokines/chemokines such as TNF, IL-1, IL-6, IL-8, CCL2, CCL3, CCL4 and CXCL10. Promotes secretion of interferon-gamma by macrophage-stimulated natural killer (NK) cells in concert with other cytokines like IL-2 or IL-12. TLR4 is proposed to be the primary receptor promoting macrophage activation and signaling through TLR4 seems to implicate LY96/MD-2. In bacterial LPS- or LTA-mediated inflammatory responses binds to the endotoxins and transfers them to CD14 for signaling to the respective TLR4:LY96 and TLR2 complexes. Contributes to tumor proliferation by association with ACER/RAGE. Can bind to IL1-beta and signals through the IL1R1:IL1RAP receptor complex. Binding to class A CpG activates cytokine production in plasmacytoid dendritic cells implicating TLR9, MYD88 and AGER/RAGE and can activate autoreactive B cells. Via HMGB1-containing chromatin immune complexes may also promote B cell responses to endogenous TLR9 ligands through a B-cell receptor (BCR)-dependent and ACER/RAGE-independent mechanism. Inhibits phagocytosis of apoptotic cells by macrophages; the function is dependent on poly-ADP-ribosylation and involves binding to phosphatidylserine on the cell surface of apoptotic cells. In adaptive immunity may be involved in enhancing immunity through activation of effector T-cells and suppression of regulatory T (TReg) cells. In contrast, without implicating effector or regulatory T-cells, required for tumor infiltration and activation of T-cells expressing the lymphotoxin LTA:LTB heterotrimer thus promoting tumor malignant progression. Also reported to limit proliferation of T-cells. Released HMGB1:nucleosome complexes formed during apoptosis can signal through TLR2 to induce cytokine production. Involved in induction of immunological tolerance by apoptotic cells; its pro-inflammatory activities when released by apoptotic cells are neutralized by reactive oxygen species (ROS)-dependent oxidation specifically on Cys-106. During macrophage activation by activated lymphocyte-derived self apoptotic DNA (ALD-DNA) promotes recruitment of ALD-DNA to endosomes. This Mus musculus (Mouse) protein is High mobility group protein B1 (Hmgb1).